The sequence spans 496 residues: Glycerol kinase (496 aa).

ADP is bound at residue threonine 11. ATP contacts are provided by threonine 11, threonine 12, and serine 13. Threonine 11 provides a ligand contact to sn-glycerol 3-phosphate. Arginine 15 is a binding site for ADP. Arginine 81, glutamate 82, tyrosine 133, and aspartate 242 together coordinate sn-glycerol 3-phosphate. Glycerol contacts are provided by arginine 81, glutamate 82, tyrosine 133, aspartate 242, and glutamine 243. Threonine 264 and glycine 307 together coordinate ADP. Residues threonine 264, glycine 307, and glutamine 311 each contribute to the ATP site. Residue asparagine 413 participates in ADP binding.

It belongs to the FGGY kinase family.

The catalysed reaction is glycerol + ATP = sn-glycerol 3-phosphate + ADP + H(+). It functions in the pathway polyol metabolism; glycerol degradation via glycerol kinase pathway; sn-glycerol 3-phosphate from glycerol: step 1/1. Inhibited by fructose 1,6-bisphosphate (FBP). Its function is as follows. Key enzyme in the regulation of glycerol uptake and metabolism. Catalyzes the phosphorylation of glycerol to yield sn-glycerol 3-phosphate. In Borrelia duttonii (strain Ly), this protein is Glycerol kinase.